Here is a 251-residue protein sequence, read N- to C-terminus: Segregation and condensation protein A (251 aa).

This sequence belongs to the ScpA family. In terms of assembly, component of a cohesin-like complex composed of ScpA, ScpB and the Smc homodimer, in which ScpA and ScpB bind to the head domain of Smc. The presence of the three proteins is required for the association of the complex with DNA.

The protein localises to the cytoplasm. Participates in chromosomal partition during cell division. May act via the formation of a condensin-like complex containing Smc and ScpB that pull DNA away from mid-cell into both cell halves. This Exiguobacterium sibiricum (strain DSM 17290 / CCUG 55495 / CIP 109462 / JCM 13490 / 255-15) protein is Segregation and condensation protein A.